A 517-amino-acid polypeptide reads, in one-letter code: T-box transcription factor TBX22 (517 aa).

The segment at 1 to 83 is disordered; it reads MALSSRAHAF…SDESNSQESL (83 aa). Acidic residues predominate over residues 35 to 45; it reads LQEEQFVEEGE. Residues 46–66 are compositionally biased toward basic and acidic residues; the sequence is EILRSPSRDSQQPEKRLKAES. Residues 74 to 83 show a composition bias toward low complexity; that stretch reads SDESNSQESL. Residues 93–280 constitute a DNA-binding region (T-box); sequence LQGSDLWKRF…RNPFAKGFRD (188 aa). The tract at residues 312–333 is disordered; that stretch reads TQSGSSGSSPVTSSGGAPSPLN. The segment covering 314-333 has biased composition (low complexity); it reads SGSSGSSPVTSSGGAPSPLN.

It is found in the nucleus. Probable transcriptional regulator involved in developmental processes. This is major determinant crucial to palatogenesis. This chain is T-box transcription factor TBX22 (Tbx22), found in Mus musculus (Mouse).